Here is a 715-residue protein sequence, read N- to C-terminus: Polyribonucleotide nucleotidyltransferase (715 aa).

Positions 493 and 499 each coordinate Mg(2+). Residues 560-619 (PRMITVKINPEKIRDVIGKGGSVIRALTEETGTTIDISDDGVVTIASTSSEGMAEAKKRI) enclose the KH domain. Positions 629-697 (GQVYEGTVLK…EKGRVRLSAK (69 aa)) constitute an S1 motif domain.

This sequence belongs to the polyribonucleotide nucleotidyltransferase family. It depends on Mg(2+) as a cofactor.

The protein localises to the cytoplasm. It carries out the reaction RNA(n+1) + phosphate = RNA(n) + a ribonucleoside 5'-diphosphate. In terms of biological role, involved in mRNA degradation. Catalyzes the phosphorolysis of single-stranded polyribonucleotides processively in the 3'- to 5'-direction. The polypeptide is Polyribonucleotide nucleotidyltransferase (Burkholderia orbicola (strain MC0-3)).